The sequence spans 273 residues: Large ribosomal subunit protein uL2 (273 aa).

The tract at residues 224–260 (AMNPVDHPHGGGEGKTSGGRHPVTPWGKKTKGKKTRK) is disordered. Positions 251–260 (KKTKGKKTRK) are enriched in basic residues.

This sequence belongs to the universal ribosomal protein uL2 family. As to quaternary structure, part of the 50S ribosomal subunit. Forms a bridge to the 30S subunit in the 70S ribosome.

Its function is as follows. One of the primary rRNA binding proteins. Required for association of the 30S and 50S subunits to form the 70S ribosome, for tRNA binding and peptide bond formation. It has been suggested to have peptidyltransferase activity; this is somewhat controversial. Makes several contacts with the 16S rRNA in the 70S ribosome. The protein is Large ribosomal subunit protein uL2 of Orientia tsutsugamushi (strain Ikeda) (Rickettsia tsutsugamushi).